Consider the following 62-residue polypeptide: Single-pass membrane and coiled-coil domain-containing protein 4 homolog (62 aa).

The tract at residues methionine 1–histidine 27 is disordered. Residues alanine 9–valine 31 are a coiled coil. A helical membrane pass occupies residues valine 30–tyrosine 50.

This sequence belongs to the SMCO4 family.

Its subcellular location is the membrane. In Nematostella vectensis (Starlet sea anemone), this protein is Single-pass membrane and coiled-coil domain-containing protein 4 homolog.